The chain runs to 116 residues: Large ribosomal subunit protein bL17 (116 aa).

The protein belongs to the bacterial ribosomal protein bL17 family. Part of the 50S ribosomal subunit. Contacts protein L32.

In Rippkaea orientalis (strain PCC 8801 / RF-1) (Cyanothece sp. (strain PCC 8801)), this protein is Large ribosomal subunit protein bL17.